Here is a 208-residue protein sequence, read N- to C-terminus: Neuroendocrine protein 7B2 (208 aa).

An N-terminal signal peptide occupies residues 1–26 (MGMYSAIPLALPMVLLMVYGLTPSLG). A disulfide bridge connects residues Cys120 and Cys129. Position 204 is a phosphoserine (Ser204).

Belongs to the 7B2 family. As to quaternary structure, interacts with pcsk2 early in the secretory pathway. Dissociation occurs at later stages. Post-translationally, proteolytically cleaved in the Golgi by a furin-like convertase to generate bioactive peptides. Sulfated on tyrosine residues.

The protein resides in the secreted. Functionally, acts as a molecular chaperone for pcsk2, preventing its premature activation in the regulated secretory pathway. Binds to inactive pcsk2 in the endoplasmic reticulum and facilitates its transport from there to later compartments of the secretory pathway where it is proteolytically matured and activated. Also required for cleavage of pcsk2 but does not appear to be involved in its folding. In Xenopus laevis (African clawed frog), this protein is Neuroendocrine protein 7B2 (scg5.L).